Consider the following 131-residue polypeptide: uncharacterized protein (131 aa).

This is an uncharacterized protein from Saccharomyces cerevisiae (strain ATCC 204508 / S288c) (Baker's yeast).